The following is a 449-amino-acid chain: Biotin carboxylase (449 aa).

A Biotin carboxylation domain is found at 1–445 (MLEKVLIANR…NIHYLEKKLG (445 aa)). ATP contacts are provided by residues Lys116, Lys159, 165-166 (GG), 201-204 (EKFL), His209, and His236. The 198-residue stretch at 120–317 (KDAMKRAGVP…IVKEMLRIAS (198 aa)) folds into the ATP-grasp domain. Lys238 is a hydrogencarbonate binding site. Glu276 and Glu288 together coordinate ATP. Mg(2+) is bound by residues Glu276, Glu288, and Asn290. Mn(2+) contacts are provided by Glu276, Glu288, and Asn290. 3 residues coordinate hydrogencarbonate: Arg292, Val295, and Arg338. The active site involves Arg292. Biotin is bound at residue Arg338.

As to quaternary structure, acetyl-CoA carboxylase is a heterohexamer of biotin carboxyl carrier protein, biotin carboxylase and the two subunits of carboxyl transferase in a 2:2 complex. The cofactor is Mg(2+). Requires Mn(2+) as cofactor.

The enzyme catalyses N(6)-biotinyl-L-lysyl-[protein] + hydrogencarbonate + ATP = N(6)-carboxybiotinyl-L-lysyl-[protein] + ADP + phosphate + H(+). The protein operates within lipid metabolism; malonyl-CoA biosynthesis; malonyl-CoA from acetyl-CoA: step 1/1. In terms of biological role, this protein is a component of the acetyl coenzyme A carboxylase complex; first, biotin carboxylase catalyzes the carboxylation of the carrier protein and then the transcarboxylase transfers the carboxyl group to form malonyl-CoA. This Pseudomonas aeruginosa (strain ATCC 15692 / DSM 22644 / CIP 104116 / JCM 14847 / LMG 12228 / 1C / PRS 101 / PAO1) protein is Biotin carboxylase (accC).